Reading from the N-terminus, the 759-residue chain is Arylphorin subunit C223 (759 aa).

Positions methionine 1–alanine 15 are cleaved as a signal peptide.

It belongs to the hemocyanin family. Heterohexamer. As to expression, fat body.

The protein localises to the secreted. The protein resides in the extracellular space. Its function is as follows. Arylphorin is a larval storage protein (LSP) which may serve as a storage protein used primarily as a source of aromatic amino acids for protein synthesis during metamorphosis. It is a constituent of the sclerotizing system of the cuticle, and serves as a carrier for ecdysteroid hormone. This is Arylphorin subunit C223 from Calliphora vicina (Blue blowfly).